Here is a 313-residue protein sequence, read N- to C-terminus: Acetylglutamate kinase (313 aa).

Substrate-binding positions include 84 to 85, arginine 106, and asparagine 210; that span reads GG.

It belongs to the acetylglutamate kinase family. ArgB subfamily.

It localises to the cytoplasm. It catalyses the reaction N-acetyl-L-glutamate + ATP = N-acetyl-L-glutamyl 5-phosphate + ADP. It functions in the pathway amino-acid biosynthesis; L-arginine biosynthesis; N(2)-acetyl-L-ornithine from L-glutamate: step 2/4. Its function is as follows. Catalyzes the ATP-dependent phosphorylation of N-acetyl-L-glutamate. The polypeptide is Acetylglutamate kinase (Gluconacetobacter diazotrophicus (strain ATCC 49037 / DSM 5601 / CCUG 37298 / CIP 103539 / LMG 7603 / PAl5)).